Here is a 173-residue protein sequence, read N- to C-terminus: Beta-defensin 129 (173 aa).

The signal sequence occupies residues 1–19 (MKLLFPIFASLMLQYKVNT). Disulfide bonds link C27–C53, C34–C48, and C38–C54. The interval 144–173 (STKSNIKESRDSATASPPPAPPPPNTLPTP) is disordered. Positions 159 to 173 (SPPPAPPPPNTLPTP) are enriched in pro residues.

It belongs to the beta-defensin family.

Its subcellular location is the secreted. Its function is as follows. Has antibacterial activity. In Hylobates lar (Lar gibbon), this protein is Beta-defensin 129 (DEFB129).